Here is a 154-residue protein sequence, read N- to C-terminus: General odorant-binding protein 83a (154 aa).

The signal sequence occupies residues 1–33; the sequence is MALNGFGRRVSASVLLIALSLLSGALILPPAAA. 3 disulfides stabilise this stretch: cysteine 55-cysteine 86, cysteine 82-cysteine 133, and cysteine 124-cysteine 142.

Belongs to the PBP/GOBP family. As to expression, in the ventrolateral region of the antenna, expressed in two distinct types of olfactory hairs: in most sensilla trichodea and in a subset of the small sensilla basiconica (at protein level).

It is found in the secreted. In Drosophila melanogaster (Fruit fly), this protein is General odorant-binding protein 83a (Obp83a).